Here is a 163-residue protein sequence, read N- to C-terminus: MTTAFYPGSFDPITNGHLDVLVQALNVAAKVIVAIGVHPGKAPLFSFDERADLIRAALEETLPERAADISVVSFDNLVVDAAREHGARLLVRGLRDGTDLDYEMQMAGMNRQMAPDIQTLFLPAGTASRPITATLVRQIAAMGGDVSAFVPGAVHQALQAKRK.

Serine 9 is a substrate binding site. ATP is bound by residues 9 to 10 and histidine 17; that span reads SF. Substrate-binding residues include lysine 41, valine 78, and arginine 92. ATP-binding positions include 93–95, glutamate 103, and 128–134; these read GLR and SRPITAT.

The protein belongs to the bacterial CoaD family. In terms of assembly, homohexamer. The cofactor is Mg(2+).

The protein resides in the cytoplasm. It catalyses the reaction (R)-4'-phosphopantetheine + ATP + H(+) = 3'-dephospho-CoA + diphosphate. Its pathway is cofactor biosynthesis; coenzyme A biosynthesis; CoA from (R)-pantothenate: step 4/5. In terms of biological role, reversibly transfers an adenylyl group from ATP to 4'-phosphopantetheine, yielding dephospho-CoA (dPCoA) and pyrophosphate. The sequence is that of Phosphopantetheine adenylyltransferase from Rhizobium meliloti (strain 1021) (Ensifer meliloti).